Reading from the N-terminus, the 257-residue chain is UPF0246 protein YaaA (257 aa).

This sequence belongs to the UPF0246 family.

This Salmonella typhi protein is UPF0246 protein YaaA.